Reading from the N-terminus, the 199-residue chain is Charged multivesicular body protein 1b (199 aa).

The stretch at 26–48 (DKEEKAEKAKIKKAIQKGNMEVA) forms a coiled coil. The interval 132-156 (MEDTMSSTTTLTTPQGQVDMLLQEM) is interaction with IST1. The disordered stretch occupies residues 167-199 (ELPQGQTGSVGTSVASAEQDELSQRLARLRDQV). Over residues 170 to 182 (QGQTGSVGTSVAS) the composition is skewed to polar residues. An interaction with SPAST region spans residues 174–199 (GSVGTSVASAEQDELSQRLARLRDQV). A coiled-coil region spans residues 178-199 (TSVASAEQDELSQRLARLRDQV). Positions 180–196 (VASAEQDELSQRLARLR) are interaction with VPS4A, MITD1 and STAMBP. Positions 180–199 (VASAEQDELSQRLARLRDQV) are interaction with VTA1. An interaction with VPS4B region spans residues 183-199 (AEQDELSQRLARLRDQV). Positions 186-196 (DELSQRLARLR) match the MIT-interacting motif motif.

The protein belongs to the SNF7 family. In terms of assembly, probable peripherally associated component of the endosomal sorting required for transport complex III (ESCRT-III). ESCRT-III components are thought to multimerize to form a flat lattice on the perimeter membrane of the endosome. Several assembly forms of ESCRT-III may exist that interact and act sequentially. Interacts with CHMP1A. Interacts with VTA1; the interaction probably involves the open conformation of CHMP1B. Interacts with CHMP2A. Interacts with VPS4A; the interaction is direct. Interacts with VPS4B; the interaction is direct. Interacts with SPAST (via MIT domain); the interaction is direct. Interacts with IST1. Interacts with MITD1. Interacts with STAMBP.

It is found in the cytoplasm. Its subcellular location is the cytosol. It localises to the endosome. The protein localises to the late endosome membrane. Probable peripherally associated component of the endosomal sorting required for transport complex III (ESCRT-III) which is involved in multivesicular bodies (MVBs) formation and sorting of endosomal cargo proteins into MVBs. MVBs contain intraluminal vesicles (ILVs) that are generated by invagination and scission from the limiting membrane of the endosome and mostly are delivered to lysosomes enabling degradation of membrane proteins, such as stimulated growth factor receptors, lysosomal enzymes and lipids. The MVB pathway appears to require the sequential function of ESCRT-O, -I,-II and -III complexes. ESCRT-III proteins mostly dissociate from the invaginating membrane before the ILV is released. The ESCRT machinery also functions in topologically equivalent membrane fission events, such as the terminal stages of cytokinesis and the budding of enveloped viruses (lentiviruses). ESCRT-III proteins are believed to mediate the necessary vesicle extrusion and/or membrane fission activities, possibly in conjunction with the AAA ATPase VPS4. Involved in cytokinesis. Involved in recruiting VPS4A and/or VPS4B and SPAST to the midbody of dividing cells. This is Charged multivesicular body protein 1b (CHMP1B) from Bos taurus (Bovine).